Here is a 249-residue protein sequence, read N- to C-terminus: Homeobox-leucine zipper protein HOX6 (249 aa).

The tract at residues 1–32 (MDGEEDSEWMMMDVGGKGGKGGGGGGAADRKK) is disordered. Over residues 15 to 27 (GGKGGKGGGGGGA) the composition is skewed to gly residues. A DNA-binding region (homeobox) is located at residues 27 to 86 (AADRKKRFSEEQIKSLESMFATQTKLEPRQKLQLARELGLQPRQVAIWFQNKRARWKSKQ). The segment at 85-129 (KQLEREYSALRDDYDALLCSYESLKKEKLALIKQLEKLAEMLQEP) is leucine-zipper. A disordered region spans residues 194-249 (FLRPSSQHHPPPPHAGAGFTSSEPAADHQSFNFHSSWPSSTEQTCSSTPWWEFESE). The span at 212–242 (FTSSEPAADHQSFNFHSSWPSSTEQTCSSTP) shows a compositional bias: polar residues.

The protein belongs to the HD-ZIP homeobox family. Class I subfamily. Expressed in seedlings, roots, leaves, nodes, internodes, flowers and embryo.

It localises to the nucleus. Its function is as follows. Probable transcription factor that binds to the DNA sequence 5'-CAAT[AT]ATTG-3'. The chain is Homeobox-leucine zipper protein HOX6 (HOX6) from Oryza sativa subsp. indica (Rice).